The primary structure comprises 488 residues: Glutamyl-tRNA(Gln) amidotransferase subunit A (488 aa).

Residues Lys-77 and Ser-152 each act as charge relay system in the active site. Residue Ser-176 is the Acyl-ester intermediate of the active site.

Belongs to the amidase family. GatA subfamily. Heterotrimer of A, B and C subunits.

The enzyme catalyses L-glutamyl-tRNA(Gln) + L-glutamine + ATP + H2O = L-glutaminyl-tRNA(Gln) + L-glutamate + ADP + phosphate + H(+). Functionally, allows the formation of correctly charged Gln-tRNA(Gln) through the transamidation of misacylated Glu-tRNA(Gln) in organisms which lack glutaminyl-tRNA synthetase. The reaction takes place in the presence of glutamine and ATP through an activated gamma-phospho-Glu-tRNA(Gln). This chain is Glutamyl-tRNA(Gln) amidotransferase subunit A, found in Streptococcus uberis (strain ATCC BAA-854 / 0140J).